The following is a 460-amino-acid chain: Malonyl-coenzyme A:anthocyanin 3-O-glucoside-6''-O-malonyltransferase (460 aa).

Active-site proton acceptor residues include H173 and D400.

It belongs to the plant acyltransferase family.

The catalysed reaction is an anthocyanidin 3-O-beta-D-glucoside + malonyl-CoA = an anthocyanidin 3-O-(6-O-malonyl-beta-D-glucoside) + CoA. With respect to regulation, completely inhibited by 5 mM N-ethylmaleimide or 0.1 mM Cu(2+). Partially inhibited by 0.1 mM Fe(2+) or 0.1 mM Hg(2+). Catalyzes the transfer of the malonyl group from malonyl-CoA to pelargonidin 3-O-glucoside to produce pelargonidin 3-O-6''-O-malonylglucoside. Can also transfer the malonyl group from malonyl-CoA to cyanidin 3-O-glucoside, delphinidin 3-O-glucoside and quercetin 3-O-glucoside. In Dahlia pinnata (Pinnate dahlia), this protein is Malonyl-coenzyme A:anthocyanin 3-O-glucoside-6''-O-malonyltransferase.